Consider the following 777-residue polypeptide: Androgen receptor (777 aa).

Positions 1–416 (MEVHIGLGGV…IDYYFPPQKP (416 aa)) are modulating. Disordered regions lie at residues 53-95 (CVHP…QAPQ), 110-132 (GEQG…YPES), and 205-241 (RRAG…LSEP). 2 NR C4-type zinc fingers span residues 417 to 434 (CLSC…ALTC) and 453 to 472 (CASR…CPSC). The segment at residues 417–489 (CLSCEDEASG…AGMTLGARKL (73 aa)) is a DNA-binding region (nuclear receptor). An NR LBD domain is found at 526–757 (SCQPIFLNVL…DFPEMMSEII (232 aa)). 17beta-hydroxy-5alpha-androstan-3-one-binding residues include Asn563, Arg610, and Thr735.

It belongs to the nuclear hormone receptor family. NR3 subfamily. Binds DNA as a homodimer. Interacts via the ligand-binding domain with LXXLL and FXXLF motifs from coactivator proteins. Interacts (via ligand-binding domain) with TRIM68. As to expression, detected in somatic Leydig and Sertoli cells in testis with high level expression. Also detected at lower expression levels in forebrain and heart.

The protein resides in the nucleus. It is found in the cytoplasm. Its function is as follows. Steroid hormone receptors are ligand-activated transcription factors that regulate eukaryotic gene expression and affect cellular proliferation and differentiation in target tissues. Transcription factor activity is modulated by bound coactivator and corepressor proteins. The sequence is that of Androgen receptor (ar) from Aquarana catesbeiana (American bullfrog).